A 501-amino-acid polypeptide reads, in one-letter code: L-aspartate decarboxylase dtxS4 (501 aa).

Position 106 to 108 (Lys-106 to Thr-108) interacts with substrate. An N6-(pyridoxal phosphate)lysine modification is found at Lys-320. A substrate-binding site is contributed by Arg-474.

The protein belongs to the group II decarboxylase family. It depends on pyridoxal 5'-phosphate as a cofactor.

It carries out the reaction L-aspartate + H(+) = beta-alanine + CO2. It functions in the pathway secondary metabolite biosynthesis. Its function is as follows. L-aspartate decarboxylase; part of the gene cluster that mediates the biosynthesis of destruxins, insecticidal cyclic hexadepsipeptides which induce flaccid paralysis and visceral muscle contraction in insects through targeting the calcium channels and vacuolar-type ATPases. The aldo-keto reductase dtxS3 converts alpha-ketoisocaproic acid from deaminated leucine into alpha-hydroxyisocaproic acid (HIC), which is the first substrate for destruxin assembly by dtxS1. L-aspartate decarboxylase dtxS4 converts aspartic acid into beta-alanine, the last substrate for the destruxin assembly line performed by dtxS1. The nonribosomal peptide synthetase dtxS1 synthesizes destruxins B and B2, whereas the cytochrome P450 monooxygenase dtxS2 is required to convert destruxin B into other destruxin derivatives, including destructins C, D, A and E. Destruxin E-diol (ED) is further produced in a non-enzymatic manner from destruxin E. Destruxins play an important role in virulence and escape from insect host immune defenses. This chain is L-aspartate decarboxylase dtxS4, found in Metarhizium robertsii (strain ARSEF 23 / ATCC MYA-3075) (Metarhizium anisopliae (strain ARSEF 23)).